The primary structure comprises 696 residues: Caprolactamase subunit alpha (696 aa).

It belongs to the HyuA family. In terms of assembly, the caprolactamase is a heterotetramer composed of two alpha subunits (CapA) and two beta subunits (CapB).

Its activity is regulated as follows. Activity is dependent on the presence of ATP and bicarbonate. The requirement for bicarbonate may be related to allosteric activation through conformational effects, but it is also conceivable that carboxyphosphate is formed and acts as a mediator in caprolactam activation, forming carboxy- or phospholactim. Functionally, component of a caprolactamase involved in the degradation of caprolactam, an industrial compound mainly used in the production of Nylon 6. Catalyzes the ATP-dependent hydrolysis of the caprolactam ring to form 6-aminocaproic acid (6-ACA). The alpha subunit is responsible for ATP-dependent substrate phosphorylation. The enzyme cannot use 5-oxoproline. The polypeptide is Caprolactamase subunit alpha (Pseudomonas jessenii).